The sequence spans 228 residues: Phosphoglycolate phosphatase (228 aa).

Asp-9 functions as the Nucleophile in the catalytic mechanism. Positions 9 and 11 each coordinate Mg(2+). A substrate-binding site is contributed by Lys-151. The Mg(2+) site is built by Asp-174 and Asp-178.

Belongs to the archaeal SPP-like hydrolase family. It depends on Mg(2+) as a cofactor.

The enzyme catalyses 2-phosphoglycolate + H2O = glycolate + phosphate. Catalyzes the dephosphorylation of 2-phosphoglycolate. The protein is Phosphoglycolate phosphatase of Pyrobaculum aerophilum (strain ATCC 51768 / DSM 7523 / JCM 9630 / CIP 104966 / NBRC 100827 / IM2).